Reading from the N-terminus, the 475-residue chain is Splicing factor U2AF 65 kDa subunit (475 aa).

The interval 1–90 (MSDFDEFERQ…RHEKKKKVRK (90 aa)) is disordered. N-acetylserine is present on serine 2. The residue at position 2 (serine 2) is a Phosphoserine. Residues 2–93 (SDFDEFERQL…KKKKVRKYWD (92 aa)) form a required for interaction with PRPF19 region. A compositionally biased stretch (basic and acidic residues) spans 7–22 (FERQLNENKQERDKEN). Residue lysine 15 is modified to 5-hydroxylysine; by JMJD6; alternate. A Glycyl lysine isopeptide (Lys-Gly) (interchain with G-Cter in SUMO2); alternate cross-link involves residue lysine 15. Residues 17–47 (ERDKENRHRKRSHSRSRSRDRKRRSRSRDRR) form a necessary and sufficient to stimulate pre-mRNAs 3'-end cleavage in a CFIm complex-dependent manner region. A compositionally biased stretch (basic residues) spans 23-46 (RHRKRSHSRSRSRDRKRRSRSRDR). The segment covering 47–56 (RNRDQRSASR) has biased composition (basic and acidic residues). Lysine 70 participates in a covalent cross-link: Glycyl lysine isopeptide (Lys-Gly) (interchain with G-Cter in SUMO2); alternate. Lysine 70 carries the post-translational modification N6-acetyllysine; alternate. Position 79 is a phosphoserine (serine 79). A compositionally biased stretch (basic residues) spans 79–89 (SPRHEKKKKVR). RRM domains follow at residues 149–231 (RRLY…RPHD), 259–337 (HKLF…RASV), and 385–466 (LPEE…YCDP). A 5-hydroxylysine; by JMJD6 modification is found at lysine 276. A Phosphoserine modification is found at serine 294.

It belongs to the splicing factor SR family. In terms of assembly, interacts with U2AF1L4. Heterodimer with U2AF1. Binds unphosphorylated SF1. Interacts with SCAF11 and SNW1. Interacts with ZRSR2/U2AF1-RS2. Interacts with RBM17. Interacts with PRPF19; the interaction is direct. Interacts with POLR2A (via the C-terminal domain); recruits PRPF19 and the Prp19 complex to the pre-mRNA. Interacts with KHDC4 (Isoform 2). Interacts with ZRSR2. Interacts with the SF3B complex composed of SF3B1, SF3B2, SF3B3, SF3B4, SF3B5, SF3B6 and PHF5A. Interacts (via N-terminus) with CPSF7 (via C-terminus); this interaction stimulates pre-mRNA 3'-end processing by promoting the recruitment of the CFIm complex to cleavage and polyadenylation signals. Interacts with ARGLU1; interaction may be involved in ARGLU1-mediated modulation of alternative splicing. In terms of processing, lysyl-hydroxylation at Lys-15 and Lys-276 affects the mRNA splicing activity of the protein, leading to regulate some, but not all, alternative splicing events.

The protein resides in the nucleus. Plays a role in pre-mRNA splicing and 3'-end processing. By recruiting PRPF19 and the PRP19C/Prp19 complex/NTC/Nineteen complex to the RNA polymerase II C-terminal domain (CTD), and thereby pre-mRNA, may couple transcription to splicing. Induces cardiac troponin-T (TNNT2) pre-mRNA exon inclusion in muscle. Regulates the TNNT2 exon 5 inclusion through competition with MBNL1. Binds preferentially to a single-stranded structure within the polypyrimidine tract of TNNT2 intron 4 during spliceosome assembly. Required for the export of mRNA out of the nucleus, even if the mRNA is encoded by an intron-less gene. Represses the splicing of MAPT/Tau exon 10. Positively regulates pre-mRNA 3'-end processing by recruiting the CFIm complex to cleavage and polyadenylation signals. This Homo sapiens (Human) protein is Splicing factor U2AF 65 kDa subunit (U2AF2).